The sequence spans 270 residues: Interleukin-2 receptor subunit alpha (270 aa).

Residues 1–21 (MEPSLLMWGFFTFTMIPGCMA) form the signal peptide. The region spanning 22–84 (GACVQQPPSL…FWENKCQCMP (63 aa)) is the Sushi 1 domain. Residues 22–245 (GACVQQPPSL…QPIIFTTQYQ (224 aa)) are Extracellular-facing. Cystine bridges form between Cys-24/Cys-67, Cys-49/Cys-80, and Cys-51/Cys-82. Residues Asn-33 and Asn-70 are each glycosylated (N-linked (GlcNAc...) asparagine). The disordered stretch occupies residues 87 to 124 (SPRIPVKQVTPRPEEQKERKTTETQGQMQPPNQANLPG). Residues 98–108 (RPEEQKERKTT) are compositionally biased toward basic and acidic residues. Residues 112–121 (GQMQPPNQAN) are compositionally biased toward polar residues. In terms of domain architecture, Sushi 2 spans 124-191 (GHCKEPPPWE…WTQPKLKCKS (68 aa)). Intrachain disulfides connect Cys-126–Cys-171 and Cys-153–Cys-189. N-linked (GlcNAc...) asparagine glycans are attached at residues Asn-164 and Asn-195. The disordered stretch occupies residues 190-225 (KSEKENGSFPEPQMSTAAPPTTKTSLPTRTKGTTDS). Residues 202–225 (QMSTAAPPTTKTSLPTRTKGTTDS) are compositionally biased toward polar residues. The N-linked (GlcNAc...) asparagine glycan is linked to Asn-227. Residues 246–264 (LAVAGCVLLLLSILLLSGL) form a helical membrane-spanning segment. Topologically, residues 265–270 (TWQRRR) are cytoplasmic.

In terms of assembly, non-covalent dimer of an alpha and a beta subunit. IL2R exists in 3 different forms: a high affinity dimer, an intermediate affinity monomer (beta subunit), and a low affinity monomer (alpha subunit). The high and intermediate affinity forms also associate with a gamma subunit.

The protein localises to the membrane. Receptor for interleukin-2. The receptor is involved in the regulation of immune tolerance by controlling regulatory T cells (TREGs) activity. TREGs suppress the activation and expansion of autoreactive T-cells. This Sus scrofa (Pig) protein is Interleukin-2 receptor subunit alpha (IL2RA).